The following is a 528-amino-acid chain: Lysine--tRNA ligase (528 aa).

The 'HIGH' region motif lies at 44–52; that stretch reads PSGLPHIGT. The short motif at 290 to 294 is the 'KMSKS' region element; it reads KISKS. An ATP-binding site is contributed by lysine 293.

This sequence belongs to the class-I aminoacyl-tRNA synthetase family.

The protein localises to the cytoplasm. It carries out the reaction tRNA(Lys) + L-lysine + ATP = L-lysyl-tRNA(Lys) + AMP + diphosphate. The chain is Lysine--tRNA ligase (lysS) from Rickettsia prowazekii (strain Madrid E).